Reading from the N-terminus, the 385-residue chain is MKFLTLALSATATAMIIVNPEQQPLAPSIVQNPQHKSLIELAPYRTRWVTEEEKWSLKLDGVNFIDVTDEYQSGSYGTLHTTRVVHYPGAMEHAHEILPLTETLDKSNMRSNLEHFTSFYTRYYKSQTGIESATWLFDQVTAAVHESGASDHGATVERFAHPWGQFSIIARIPGQTDNTVILGSHQDSINLFLPSILAAPGADDDGSGTVTILEALRALLRSETIAHGQARNTIEFHWYSAEEGGLLGSQAVYANYKKNQRNVKAMLQQDMTGYVQGTLDAGEKESVGVIIDYVDQGLTAFIKEVITTYCDVPYVETKCGYACSDHASASRYGYPSAFVIESQFENSDKRIHTTEDKIEYLSFDHMLQHAKMSLAFAYELAFAPF.

An N-terminal signal peptide occupies residues 1-14; that stretch reads MKFLTLALSATATA. Residues 15–85 constitute a propeptide that is removed on maturation; sequence MIIVNPEQQP…YGTLHTTRVV (71 aa). The Zn(2+) site is built by His-185, Asp-204, Glu-243, and Asp-270. Cys-319 and Cys-323 form a disulfide bridge. Residue His-352 coordinates Zn(2+).

Belongs to the peptidase M28 family. M28E subfamily. Monomer. Zn(2+) serves as cofactor.

The protein resides in the secreted. In terms of biological role, extracellular aminopeptidase that allows assimilation of proteinaceous substrates. In Penicillium rubens (strain ATCC 28089 / DSM 1075 / NRRL 1951 / Wisconsin 54-1255) (Penicillium chrysogenum), this protein is Leucine aminopeptidase 1 (lap1).